Consider the following 324-residue polypeptide: Serine/threonine-protein phosphatase PP1 isozyme 8 (324 aa).

4 residues coordinate Mn(2+): aspartate 66, histidine 68, aspartate 94, and asparagine 126. The Proton donor role is filled by histidine 127. The Mn(2+) site is built by histidine 175 and histidine 250.

This sequence belongs to the PPP phosphatase family. PP-1 subfamily. Mn(2+) is required as a cofactor. As to expression, expressed in roots, rosettes and flowers.

Its subcellular location is the nucleus. The protein localises to the cytoplasm. It carries out the reaction O-phospho-L-seryl-[protein] + H2O = L-seryl-[protein] + phosphate. The catalysed reaction is O-phospho-L-threonyl-[protein] + H2O = L-threonyl-[protein] + phosphate. With respect to regulation, phosphatase activity is strongly reduced by the protein phosphatase inhibitor 2 (I-2). Its function is as follows. Serine/threonine-protein phosphatase that possesses phosphatase activity toward para-nitrophenyl phosphate (pNPP) in vitro. This chain is Serine/threonine-protein phosphatase PP1 isozyme 8, found in Arabidopsis thaliana (Mouse-ear cress).